The following is a 105-amino-acid chain: Small ribosomal subunit protein uS10 (105 aa).

This sequence belongs to the universal ribosomal protein uS10 family. In terms of assembly, part of the 30S ribosomal subunit.

Functionally, involved in the binding of tRNA to the ribosomes. The chain is Small ribosomal subunit protein uS10 from Acidobacterium capsulatum (strain ATCC 51196 / DSM 11244 / BCRC 80197 / JCM 7670 / NBRC 15755 / NCIMB 13165 / 161).